Here is a 422-residue protein sequence, read N- to C-terminus: Serine hydroxymethyltransferase 2 (422 aa).

(6S)-5,6,7,8-tetrahydrofolate is bound by residues Leu-121 and 125–127 (GHL). Lys-230 bears the N6-(pyridoxal phosphate)lysine mark.

This sequence belongs to the SHMT family. As to quaternary structure, homodimer. Pyridoxal 5'-phosphate is required as a cofactor.

The protein localises to the cytoplasm. It carries out the reaction (6R)-5,10-methylene-5,6,7,8-tetrahydrofolate + glycine + H2O = (6S)-5,6,7,8-tetrahydrofolate + L-serine. The protein operates within one-carbon metabolism; tetrahydrofolate interconversion. It participates in amino-acid biosynthesis; glycine biosynthesis; glycine from L-serine: step 1/1. In terms of biological role, catalyzes the reversible interconversion of serine and glycine with tetrahydrofolate (THF) serving as the one-carbon carrier. This reaction serves as the major source of one-carbon groups required for the biosynthesis of purines, thymidylate, methionine, and other important biomolecules. Also exhibits THF-independent aldolase activity toward beta-hydroxyamino acids, producing glycine and aldehydes, via a retro-aldol mechanism. In Agrobacterium fabrum (strain C58 / ATCC 33970) (Agrobacterium tumefaciens (strain C58)), this protein is Serine hydroxymethyltransferase 2.